The following is a 200-amino-acid chain: TATA-box-binding protein (200 aa).

Repeat copies occupy residues 25 to 101 (LQNI…ARII) and 115 to 192 (IQNI…YPVL).

This sequence belongs to the TBP family. As to quaternary structure, belongs to the TFIID complex together with the TBP-associated factors (TAFs). Binds DNA as monomer.

It is found in the nucleus. General transcription factor that functions at the core of the DNA-binding multiprotein factor TFIID. Binding of TFIID to the TATA box is the initial transcriptional step of the pre-initiation complex (PIC), playing a role in the activation of eukaryotic genes transcribed by RNA polymerase II. The chain is TATA-box-binding protein from Nicotiana tabacum (Common tobacco).